Reading from the N-terminus, the 268-residue chain is Uronate dehydrogenase (268 aa).

NAD(+) is bound by residues 17–18 (GL), 37–39 (DIS), 55–56 (DL), and 75–79 (FGGVS). Substrate-binding positions include serine 79 and 115-117 (SNH). The Proton acceptor role is filled by tyrosine 140. Lysine 144 contributes to the NAD(+) binding site. Serine 169 lines the substrate pocket. Residue serine 170 participates in NAD(+) binding. Arginine 178 is a binding site for substrate.

It belongs to the NAD(P)-dependent epimerase/dehydratase family. Homohexamer.

The enzyme catalyses beta-D-galacturonate + NAD(+) = D-galactaro-1,5-lactone + NADH + H(+). The catalysed reaction is beta-D-glucuronate + NAD(+) = D-glucaro-1,5-lactone + NADH + H(+). It participates in carbohydrate acid metabolism; D-galacturonate degradation via prokaryotic oxidative pathway. Its function is as follows. Catalyzes the oxidation of beta-D-galacturonate and beta-D-glucuronate to galactarate and D-glucarate, respectively. The protein is Uronate dehydrogenase (udh) of Pseudomonas putida (strain ATCC 47054 / DSM 6125 / CFBP 8728 / NCIMB 11950 / KT2440).